The primary structure comprises 370 residues: Putative agmatine deiminase (370 aa).

Catalysis depends on Cys361, which acts as the Amidino-cysteine intermediate.

It belongs to the agmatine deiminase family.

The catalysed reaction is agmatine + H2O = N-carbamoylputrescine + NH4(+). The chain is Putative agmatine deiminase from Shewanella sp. (strain MR-7).